We begin with the raw amino-acid sequence, 394 residues long: Putative agmatinase 1 (394 aa).

The N-terminal stretch at 1 to 20 is a signal peptide; sequence MALQSLFLILLAGAAQLAQA. 6 residues coordinate Mn(2+): histidine 186, aspartate 209, histidine 211, aspartate 213, aspartate 307, and aspartate 309.

It belongs to the arginase family. The cofactor is Mn(2+).

It catalyses the reaction agmatine + H2O = urea + putrescine. The sequence is that of Putative agmatinase 1 from Schizosaccharomyces pombe (strain 972 / ATCC 24843) (Fission yeast).